A 232-amino-acid chain; its full sequence is Probable ADP-ribosylation factor GTPase-activating protein AGD15 (232 aa).

Residues Ser-16–Pro-130 enclose the Arf-GAP domain. The C4-type zinc-finger motif lies at Cys-31–Cys-54. The tract at residues Pro-203–Asp-232 is disordered. Polar residues predominate over residues Lys-206–Asp-232.

In terms of biological role, GTPase-activating protein (GAP) for ADP ribosylation factor (ARF). This is Probable ADP-ribosylation factor GTPase-activating protein AGD15 (AGD15) from Arabidopsis thaliana (Mouse-ear cress).